The chain runs to 291 residues: N-acetylmannosamine kinase (291 aa).

Residues 5 to 12 (AIDIGGTK) and 132 to 139 (GVGGGVVS) contribute to the ATP site. Zn(2+) contacts are provided by H156, C166, C168, and C173.

The protein belongs to the ROK (NagC/XylR) family. NanK subfamily. As to quaternary structure, homodimer.

It catalyses the reaction an N-acyl-D-mannosamine + ATP = an N-acyl-D-mannosamine 6-phosphate + ADP + H(+). It participates in amino-sugar metabolism; N-acetylneuraminate degradation; D-fructose 6-phosphate from N-acetylneuraminate: step 2/5. Its function is as follows. Catalyzes the phosphorylation of N-acetylmannosamine (ManNAc) to ManNAc-6-P. In Escherichia coli O6:K15:H31 (strain 536 / UPEC), this protein is N-acetylmannosamine kinase.